We begin with the raw amino-acid sequence, 313 residues long: Ribosomal RNA small subunit methyltransferase H (313 aa).

S-adenosyl-L-methionine contacts are provided by residues 35 to 37 (GGH), Asp-55, Phe-80, Asp-102, and Gln-109.

It belongs to the methyltransferase superfamily. RsmH family.

Its subcellular location is the cytoplasm. It carries out the reaction cytidine(1402) in 16S rRNA + S-adenosyl-L-methionine = N(4)-methylcytidine(1402) in 16S rRNA + S-adenosyl-L-homocysteine + H(+). Its function is as follows. Specifically methylates the N4 position of cytidine in position 1402 (C1402) of 16S rRNA. The protein is Ribosomal RNA small subunit methyltransferase H of Shewanella putrefaciens (strain CN-32 / ATCC BAA-453).